A 728-amino-acid chain; its full sequence is Probable ubiquitin-conjugating enzyme protein 17 (728 aa).

The span at 1–17 (MSSQASQRSSSTSAVAQ) shows a compositional bias: low complexity. 2 disordered regions span residues 1 to 23 (MSSQASQRSSSTSAVAQKTRERR) and 123 to 155 (SSRSADEQKRRARRNSSASLSHKGTGYGTGSTR). The region spanning 402-568 (DRTKRIAKEL…IEHATLNYAI (167 aa)) is the UBC core domain. The active-site Glycyl thioester intermediate is the C495. Disordered regions lie at residues 649 to 678 (PFAKEEAEESERLKREQSEKEEKQKKEAAA) and 709 to 728 (RTQPTGDYSVPSVNEPSTSS). Residues 658–678 (SERLKREQSEKEEKQKKEAAA) are compositionally biased toward basic and acidic residues. Polar residues predominate over residues 710–728 (TQPTGDYSVPSVNEPSTSS).

Belongs to the ubiquitin-conjugating enzyme family.

This Caenorhabditis elegans protein is Probable ubiquitin-conjugating enzyme protein 17 (ubc-17).